A 208-amino-acid polypeptide reads, in one-letter code: Microtubule-associated protein Jupiter (208 aa).

2 disordered regions span residues 24 to 43 (RPPG…QTPR) and 82 to 106 (RGQK…PGKN). Ser-30 bears the Phosphoserine mark. Thr-41 is modified (phosphothreonine). Residues 82–93 (RGQKTVDSHSRL) show a composition bias toward basic and acidic residues. Phosphothreonine is present on residues Thr-98 and Thr-102. Phosphoserine occurs at positions 111, 139, and 150. Positions 132 to 208 (HYNGKSGSVS…PPGGYSSGLW (77 aa)) are disordered. A compositionally biased stretch (low complexity) spans 137–150 (SGSVSSASSSVSSS). Composition is skewed to polar residues over residues 151–165 (TENL…SEGN) and 178–189 (EYSQRQESSNGG).

The protein belongs to the MAP Jupiter family. In terms of tissue distribution, ubiquitous expression throughout development. Expressed during cell division in the syncytial embryo. Expressed in developing photoreceptors of the eye imaginal disk of the third larval stage. In adults, highly expressed in neurons of the brain, concentrated in axons. In the adult ovaries, expression accumulates in the germarium and the polar follicular cells as well as in the oocyte along the microtubule network.

The protein localises to the nucleus. It is found in the cytoplasm. Its subcellular location is the cytoskeleton. It localises to the spindle. Binds to all microtubule populations. In Drosophila melanogaster (Fruit fly), this protein is Microtubule-associated protein Jupiter.